The sequence spans 512 residues: Inositol-3-phosphate synthase (512 aa).

Positions 72, 73, 74, 75, 145, 182, 192, 195, 232, 233, 234, 235, 283, 284, 308, 311, 342, 343, 344, 357, 395, 396, 424, and 425 each coordinate NAD(+).

The protein belongs to the myo-inositol 1-phosphate synthase family. It depends on NAD(+) as a cofactor.

It is found in the cytoplasm. It localises to the cytosol. Its subcellular location is the nucleus. It carries out the reaction D-glucose 6-phosphate = 1D-myo-inositol 3-phosphate. Its pathway is polyol metabolism; myo-inositol biosynthesis; myo-inositol from D-glucose 6-phosphate: step 1/2. Its function is as follows. Key enzyme in myo-inositol biosynthesis pathway that catalyzes the conversion of glucose 6-phosphate to 1-myo-inositol 1-phosphate in a NAD-dependent manner. The sequence is that of Inositol-3-phosphate synthase from Mesembryanthemum crystallinum (Common ice plant).